Consider the following 430-residue polypeptide: Glutamate-1-semialdehyde 2,1-aminomutase (430 aa).

Lys267 bears the N6-(pyridoxal phosphate)lysine mark.

It belongs to the class-III pyridoxal-phosphate-dependent aminotransferase family. HemL subfamily. As to quaternary structure, homodimer. Pyridoxal 5'-phosphate is required as a cofactor.

It is found in the cytoplasm. It catalyses the reaction (S)-4-amino-5-oxopentanoate = 5-aminolevulinate. It participates in porphyrin-containing compound metabolism; protoporphyrin-IX biosynthesis; 5-aminolevulinate from L-glutamyl-tRNA(Glu): step 2/2. The sequence is that of Glutamate-1-semialdehyde 2,1-aminomutase from Sulfurovum sp. (strain NBC37-1).